Consider the following 261-residue polypeptide: Hydroxyethylthiazole kinase (261 aa).

Residue methionine 38 participates in substrate binding. ATP contacts are provided by arginine 114 and threonine 159. A substrate-binding site is contributed by glycine 186.

Belongs to the Thz kinase family. Mg(2+) serves as cofactor.

The enzyme catalyses 5-(2-hydroxyethyl)-4-methylthiazole + ATP = 4-methyl-5-(2-phosphooxyethyl)-thiazole + ADP + H(+). It participates in cofactor biosynthesis; thiamine diphosphate biosynthesis; 4-methyl-5-(2-phosphoethyl)-thiazole from 5-(2-hydroxyethyl)-4-methylthiazole: step 1/1. Catalyzes the phosphorylation of the hydroxyl group of 4-methyl-5-beta-hydroxyethylthiazole (THZ). The polypeptide is Hydroxyethylthiazole kinase (Streptococcus suis (strain 05ZYH33)).